Consider the following 366-residue polypeptide: Peptide chain release factor 1 (366 aa).

An N5-methylglutamine modification is found at Q230. Basic and acidic residues-rich tracts occupy residues 283–293 (ARDAQEARDRA) and 315–328 (VTDH…KNHP). Positions 283-335 (ARDAQEARDRAAQVGSGERSEKIRTYNYPQNRVTDHRLEGDSKNHPLDSVMAG) are disordered.

This sequence belongs to the prokaryotic/mitochondrial release factor family. In terms of processing, methylated by PrmC. Methylation increases the termination efficiency of RF1.

It is found in the cytoplasm. Peptide chain release factor 1 directs the termination of translation in response to the peptide chain termination codons UAG and UAA. The polypeptide is Peptide chain release factor 1 (Deinococcus deserti (strain DSM 17065 / CIP 109153 / LMG 22923 / VCD115)).